A 65-amino-acid chain; its full sequence is Weak toxin CM-10 (65 aa).

Intrachain disulfides connect C3-C24, C6-C11, C17-C42, C46-C57, and C58-C63.

The protein belongs to the three-finger toxin family. Ancestral subfamily. Orphan group II sub-subfamily. Expressed by the venom gland.

It is found in the secreted. Binds with low affinity to muscular (alpha-1-beta-1-delta-epsilon/CHRNA1-CHRNB1-CHRND-CHRNE) and very low affinity to neuronal (alpha-7/CHRNA7) nicotinic acetylcholine receptor (nAChR). This Naja nivea (Cape cobra) protein is Weak toxin CM-10.